A 442-amino-acid chain; its full sequence is Endothelin receptor type B (442 aa).

Residues 1-26 (MQPPPSLCGRALVALVLACGLSRIWG) form the signal peptide. At 27-101 (EERGFPPDRA…GPIEIKETFK (75 aa)) the chain is on the extracellular side. N-linked (GlcNAc...) asparagine glycosylation is present at N59. The tract at residues 69–88 (AEVPKGDRTAGSPPRTISPP) is disordered. A helical transmembrane segment spans residues 102-126 (YINTVVSCLVFVLGIIGNSTLLRII). Residues 127–137 (YKNKCMRNGPN) lie on the Cytoplasmic side of the membrane. A helical membrane pass occupies residues 138–163 (ILIASLALGDLLHIVIDIPINVYKLL). Residues 164–175 (AEDWPFGAEMCK) lie on the Extracellular side of the membrane. An intrachain disulfide couples C174 to C255. The helical transmembrane segment at 176–197 (LVPFIQKASVGITVLSLCALSI) threads the bilayer. Over 198–218 (DRYRAVASWSRIKGIGVPKWT) the chain is Cytoplasmic. Residues 219 to 243 (AVEIVLIWVVSVVLAVPEAIGFDII) form a helical membrane-spanning segment. Topologically, residues 244–271 (TMDYKGSYLRICLLHPVQKTAFMQFYKT) are extracellular. Residues 272–296 (AKDWWLFSFYFCLPLAITAFFYTLM) traverse the membrane as a helical segment. The Cytoplasmic segment spans residues 297 to 324 (TCEMLRKKSGMQIALNDHLKQRREVAKT). The residue at position 305 (S305) is a Phosphoserine. A helical membrane pass occupies residues 325–350 (VFCLVLVFALCWLPLHLSRILKLTLY). Residues 351-362 (NQNDPNRCELLS) lie on the Extracellular side of the membrane. Residues 363 to 389 (FLLVLDYIGINMASLNSCINPIALYLV) form a helical membrane-spanning segment. Topologically, residues 390–442 (SKRFKNCFKSCLCCWCQSFEEKQSLEEKQSCLKFKANDHGYDNFRSSNKYSSS) are cytoplasmic. 3 S-palmitoyl cysteine lipidation sites follow: C402, C403, and C405. The residue at position 419 (S419) is a Phosphoserine. Phosphotyrosine is present on Y439. Phosphoserine occurs at positions 440, 441, and 442.

This sequence belongs to the G-protein coupled receptor 1 family. Endothelin receptor subfamily. EDNRB sub-subfamily. In terms of processing, palmitoylation of Cys-402 was confirmed by the palmitoylation of Cys-402 in a deletion mutant lacking both Cys-403 and Cys-405. As to expression, expressed in placental stem villi vessels, but not in cultured placental villi smooth muscle cells.

Its subcellular location is the cell membrane. Functionally, non-specific receptor for endothelin 1, 2, and 3. Mediates its action by association with G proteins that activate a phosphatidylinositol-calcium second messenger system. This chain is Endothelin receptor type B, found in Homo sapiens (Human).